The chain runs to 521 residues: GMP synthase [glutamine-hydrolyzing] (521 aa).

A Glutamine amidotransferase type-1 domain is found at 8–203; it reads KILILDFGAQ…VVDVCGCQTL (196 aa). The Nucleophile role is filled by Cys85. Catalysis depends on residues His177 and Glu179. In terms of domain architecture, GMPS ATP-PPase spans 204 to 396; the sequence is WTAANIIEDQ…LGLPRTMVYR (193 aa). 231–237 serves as a coordination point for ATP; that stretch reads SGGVDSS.

In terms of assembly, homodimer.

The enzyme catalyses XMP + L-glutamine + ATP + H2O = GMP + L-glutamate + AMP + diphosphate + 2 H(+). Its pathway is purine metabolism; GMP biosynthesis; GMP from XMP (L-Gln route): step 1/1. In terms of biological role, catalyzes the synthesis of GMP from XMP. In Xanthomonas axonopodis pv. citri (strain 306), this protein is GMP synthase [glutamine-hydrolyzing].